The sequence spans 191 residues: Fe/S biogenesis protein NfuA (191 aa).

[4Fe-4S] cluster is bound by residues Cys149 and Cys152.

The protein belongs to the NfuA family. As to quaternary structure, homodimer. Requires [4Fe-4S] cluster as cofactor.

In terms of biological role, involved in iron-sulfur cluster biogenesis. Binds a 4Fe-4S cluster, can transfer this cluster to apoproteins, and thereby intervenes in the maturation of Fe/S proteins. Could also act as a scaffold/chaperone for damaged Fe/S proteins. This Yersinia pseudotuberculosis serotype O:1b (strain IP 31758) protein is Fe/S biogenesis protein NfuA.